The sequence spans 276 residues: MSWLQVVVLSVLQGLTEFLPVSSSGHLAIASRVFFEDDAGASFTAVSQLGTEVAVLVYFARDIVRIVKAWFAGLFRAGQRSADYWLGWWVIIGTIPISVVGLLFKDEIRTGARNLWLVATAMIVFSFVIAAAEYYGRQARRVEQLTWRDSIIVGLAQCLALVPGVSRSGATISAGLFLGMHRELAARFGFLLAIPAVFASGLFSLPDAFEPVGEGMSASGAQLFVSIVIAFVVGYAAVAWFLRFLVRHSMYWFVGYRIVLGTVVLVLLSAGVVSAI.

A run of 7 helical transmembrane segments spans residues 1–21 (MSWLQVVVLSVLQGLTEFLPV), 39–59 (AGASFTAVSQLGTEVAVLVYF), 84–104 (YWLGWWVIIGTIPISVVGLLF), 115–135 (LWLVATAMIVFSFVIAAAEYY), 188–208 (FGFLLAIPAVFASGLFSLPDA), 222–242 (QLFVSIVIAFVVGYAAVAWFL), and 253–273 (FVGYRIVLGTVVLVLLSAGVV).

The protein belongs to the UppP family.

It localises to the cell membrane. It catalyses the reaction di-trans,octa-cis-undecaprenyl diphosphate + H2O = di-trans,octa-cis-undecaprenyl phosphate + phosphate + H(+). Catalyzes the dephosphorylation of undecaprenyl diphosphate (UPP). Confers resistance to bacitracin. The protein is Undecaprenyl-diphosphatase of Mycolicibacterium vanbaalenii (strain DSM 7251 / JCM 13017 / BCRC 16820 / KCTC 9966 / NRRL B-24157 / PYR-1) (Mycobacterium vanbaalenii).